The following is a 634-amino-acid chain: tRNA uridine 5-carboxymethylaminomethyl modification enzyme MnmG (634 aa).

14-19 contacts FAD; sequence GGGHAG. 279-293 is a binding site for NAD(+); that stretch reads GPRYCPSIEDKVVRF.

The protein belongs to the MnmG family. In terms of assembly, homodimer. Heterotetramer of two MnmE and two MnmG subunits. FAD serves as cofactor.

The protein localises to the cytoplasm. NAD-binding protein involved in the addition of a carboxymethylaminomethyl (cmnm) group at the wobble position (U34) of certain tRNAs, forming tRNA-cmnm(5)s(2)U34. In Xanthomonas campestris pv. campestris (strain 8004), this protein is tRNA uridine 5-carboxymethylaminomethyl modification enzyme MnmG.